Consider the following 276-residue polypeptide: Casein kinase II subunit beta-3 (276 aa).

Disordered regions lie at residues 1-22 (MYKERSGGGGGGSSRSEILGGA) and 34-86 (KKLE…SEGD).

Belongs to the casein kinase 2 subunit beta family. As to quaternary structure, heterotetramer of two catalytic alpha subunits and two regulatory beta subunits. Interacts with CCA1. Interacts with LHY. In terms of processing, phosphorylated by alpha subunit.

The protein resides in the cytoplasm. It is found in the cytosol. The protein localises to the nucleus. Functionally, plays a complex role in regulating the basal catalytic activity of the alpha subunit. The tetrameric holoenzyme CK2, composed of two alpha and two beta subunits, phosphorylates the transcription factor PIF1 after an exposure to light, resulting in a proteasome-dependent degradation of PIF1 and promotion of photomorphogenesis. CK2 phosphorylates translation initiation factors. May participate in the regulation of the initiation of translation. Stimulates the binding of CCA1 to promoters. The polypeptide is Casein kinase II subunit beta-3 (CKB3) (Arabidopsis thaliana (Mouse-ear cress)).